A 78-amino-acid polypeptide reads, in one-letter code: Acyl carrier protein (78 aa).

The region spanning 4 to 78 is the Carrier domain; that stretch reads AQIKEKVYDI…QQAIDYIVKK (75 aa). Serine 39 carries the O-(pantetheine 4'-phosphoryl)serine modification.

Belongs to the acyl carrier protein (ACP) family. In terms of processing, 4'-phosphopantetheine is transferred from CoA to a specific serine of apo-ACP by AcpS. This modification is essential for activity because fatty acids are bound in thioester linkage to the sulfhydryl of the prosthetic group.

It is found in the cytoplasm. It functions in the pathway lipid metabolism; fatty acid biosynthesis. Functionally, carrier of the growing fatty acid chain in fatty acid biosynthesis. This chain is Acyl carrier protein, found in Chlorobium phaeobacteroides (strain DSM 266 / SMG 266 / 2430).